We begin with the raw amino-acid sequence, 288 residues long: ATP synthase gamma chain (288 aa).

The protein belongs to the ATPase gamma chain family. As to quaternary structure, F-type ATPases have 2 components, CF(1) - the catalytic core - and CF(0) - the membrane proton channel. CF(1) has five subunits: alpha(3), beta(3), gamma(1), delta(1), epsilon(1). CF(0) has three main subunits: a, b and c.

The protein localises to the cell inner membrane. Functionally, produces ATP from ADP in the presence of a proton gradient across the membrane. The gamma chain is believed to be important in regulating ATPase activity and the flow of protons through the CF(0) complex. This chain is ATP synthase gamma chain, found in Acidovorax ebreus (strain TPSY) (Diaphorobacter sp. (strain TPSY)).